A 129-amino-acid chain; its full sequence is Small ribosomal subunit protein uS9 (129 aa).

The protein belongs to the universal ribosomal protein uS9 family.

The polypeptide is Small ribosomal subunit protein uS9 (Chlorobium limicola (strain DSM 245 / NBRC 103803 / 6330)).